We begin with the raw amino-acid sequence, 188 residues long: uncharacterized protein (188 aa).

The helical transmembrane segment at 121 to 139 threads the bilayer; the sequence is IWLYGGASLITTFINLGLV.

To B.subtilis YwjB.

Its subcellular location is the membrane. This is an uncharacterized protein from Bacillus subtilis (strain 168).